Consider the following 308-residue polypeptide: Ferredoxin--NADP reductase (308 aa).

Glu-26, Gln-34, Tyr-39, Val-77, Phe-106, Asp-266, and Thr-306 together coordinate FAD.

It belongs to the ferredoxin--NADP reductase type 2 family. As to quaternary structure, homodimer. The cofactor is FAD.

The catalysed reaction is 2 reduced [2Fe-2S]-[ferredoxin] + NADP(+) + H(+) = 2 oxidized [2Fe-2S]-[ferredoxin] + NADPH. In Lactobacillus delbrueckii subsp. bulgaricus (strain ATCC 11842 / DSM 20081 / BCRC 10696 / JCM 1002 / NBRC 13953 / NCIMB 11778 / NCTC 12712 / WDCM 00102 / Lb 14), this protein is Ferredoxin--NADP reductase.